A 441-amino-acid chain; its full sequence is MHKVAIVGRPNVGKSSLFNRLIGRREAVVADFPGVTRDAKEGLMLYHNHRITLVDTGGLWSGDEWEAAIREKAEWAMEGAQAVVFVLDPREGLSAADYEVADWLRRVGKPVIVVANKIDSPKHEVYLAELWGLGFGDPVAISAEHARGLDELLDRVMTHLPADDEDVPEVAPIRISLIGRPNVGKSSLLNAITNTDRAIVADQPGTTRDSLDVEWDFGGQRFVLVDTAGIRKKPDTAIEDYAIQRSQAAIQRSDLIWLVVNATDMGDHELKLANLAYESGKPVIVVVNKWDLVPDEELKRTEKDLNQKLHHISFAPRVYTSAINDYGIHEMLAEAMKLHDKWQSRIPTSELNRWLEVWQMRQAVPNFHGKKLKMYFMTQVETAPPTFAIFCNRADFVTRAYEGYLQNRIREDLQLAGVPVRLKWNEKGPYKRGKKDEDSED.

EngA-type G domains lie at 2 to 164 (HKVA…PADD) and 173 to 343 (IRIS…DKWQ). GTP is bound by residues 8–15 (GRPNVGKS), 55–59 (DTGGL), 116–119 (NKID), 179–186 (GRPNVGKS), 226–230 (DTAGI), and 288–291 (NKWD).

The protein belongs to the TRAFAC class TrmE-Era-EngA-EngB-Septin-like GTPase superfamily. EngA (Der) GTPase family. As to quaternary structure, associates with the 50S ribosomal subunit.

Its function is as follows. GTPase that plays an essential role in the late steps of ribosome biogenesis. In Deinococcus deserti (strain DSM 17065 / CIP 109153 / LMG 22923 / VCD115), this protein is GTPase Der.